The primary structure comprises 490 residues: ATP synthase subunit beta, chloroplastic (490 aa).

T6 bears the Phosphothreonine mark. S13 is subject to Phosphoserine. 172–179 (GGAGVGKT) serves as a coordination point for ATP.

The protein belongs to the ATPase alpha/beta chains family. F-type ATPases have 2 components, CF(1) - the catalytic core - and CF(0) - the membrane proton channel. CF(1) has five subunits: alpha(3), beta(3), gamma(1), delta(1), epsilon(1). CF(0) has four main subunits: a(1), b(1), b'(1) and c(9-12).

The protein localises to the plastid. It is found in the chloroplast thylakoid membrane. The catalysed reaction is ATP + H2O + 4 H(+)(in) = ADP + phosphate + 5 H(+)(out). In terms of biological role, produces ATP from ADP in the presence of a proton gradient across the membrane. The catalytic sites are hosted primarily by the beta subunits. In Aethionema cordifolium (Lebanon stonecress), this protein is ATP synthase subunit beta, chloroplastic.